Reading from the N-terminus, the 405-residue chain is Deoxyguanosinetriphosphate triphosphohydrolase-like protein (405 aa).

In terms of domain architecture, HD spans 75–219 (RLTHTIEVAQ…AAIADDIAYN (145 aa)).

It belongs to the dGTPase family. Type 2 subfamily.

This is Deoxyguanosinetriphosphate triphosphohydrolase-like protein from Rhizobium etli (strain CIAT 652).